A 277-amino-acid chain; its full sequence is Proteasome subunit beta type-7 (277 aa).

Positions 1-43 (MAAVSVFQAPVGGFSFDNCRRNAVLEADFAKKGFKLPKARKTG) are cleaved as a propeptide — removed in mature form. The Nucleophile role is filled by Thr-44.

It belongs to the peptidase T1B family. The 26S proteasome consists of a 20S proteasome core and two 19S regulatory subunits. The 20S proteasome core is a barrel-shaped complex made of 28 subunits that are arranged in four stacked rings. The two outer rings are each formed by seven alpha subunits, and the two inner rings are formed by seven beta subunits. The proteolytic activity is exerted by three beta-subunits PSMB5, PSMB6 and PSMB7.

The protein localises to the cytoplasm. It is found in the nucleus. It carries out the reaction Cleavage of peptide bonds with very broad specificity.. In terms of biological role, component of the 20S core proteasome complex involved in the proteolytic degradation of most intracellular proteins. This complex plays numerous essential roles within the cell by associating with different regulatory particles. Associated with two 19S regulatory particles, forms the 26S proteasome and thus participates in the ATP-dependent degradation of ubiquitinated proteins. The 26S proteasome plays a key role in the maintenance of protein homeostasis by removing misfolded or damaged proteins that could impair cellular functions, and by removing proteins whose functions are no longer required. Associated with the PA200 or PA28, the 20S proteasome mediates ubiquitin-independent protein degradation. This type of proteolysis is required in several pathways including spermatogenesis (20S-PA200 complex) or generation of a subset of MHC class I-presented antigenic peptides (20S-PA28 complex). Within the 20S core complex, PSMB7 displays a trypsin-like activity. This Rattus norvegicus (Rat) protein is Proteasome subunit beta type-7 (Psmb7).